The following is a 424-amino-acid chain: Hydrolase ORFZ (424 aa).

The active-site Nucleophile is the serine 243.

Belongs to the AB hydrolase superfamily. FUS2 hydrolase family. Homodimer.

The protein operates within secondary metabolite biosynthesis. Hydrolyase; part of the gene cluster that mediates the biosynthesis of a tyrosine-derived cytochalasan acting as a fungal signal recognized by resistant rice plants and leads to avirulence in Pi33 resistant rice cultivars. The first step in the pathway is catalyzed by the hybrid PKS-NRPS ACE1, assisted by the enoyl reductase RAP1, that are responsible for fusion of the tyrosine precursor and the polyketide backbone. The polyketide synthase module (PKS) of ACE1 is responsible for the synthesis of the polyketide backbone and the downstream nonribosomal peptide synthetase (NRPS) amidates the carboxyl end of the polyketide with the tyrosine precursor. Because ACE1 lacks a designated enoylreductase (ER) domain, the required activity is provided the enoyl reductase RAP1. Reduction by the hydrolyase ORFZ, followed by dehydration and intra-molecular Diels-Alder cyclization by the Diels-Alderase ORF3 then yield the required isoindolone-fused macrocycle. A number of oxidative steps catalyzed by the tailoring enzymes identified within the cluster, including cytochrome P450 monooxygenases CYP1 to CYP4, the FAD-linked oxidoreductase OXR2 and the short-chain dehydrogenase/reductase OXR1, are further required to afford the final cytochalasans that confer avirulence and which have still to be identified. The monooxygenase CYP1 has been shown to be a site-selective C-18 hydroxylase whereas the function of CYP3 is the site-selective epoxidation of the C-6/C-7 olefin that is present in some intermediate compounds. Finally, SYN2 and RAP2 are not required for avirulence in Pi33 resistant rice cultivars. This Pyricularia oryzae (strain 70-15 / ATCC MYA-4617 / FGSC 8958) (Rice blast fungus) protein is Hydrolase ORFZ.